The following is a 343-amino-acid chain: Heat-inducible transcription repressor HrcA (343 aa).

It belongs to the HrcA family.

Its function is as follows. Negative regulator of class I heat shock genes (grpE-dnaK-dnaJ and groELS operons). Prevents heat-shock induction of these operons. This chain is Heat-inducible transcription repressor HrcA, found in Thermoanaerobacter sp. (strain X514).